The primary structure comprises 360 residues: DNA replication and repair protein RecF (360 aa).

30 to 37 (GQNGSGKT) lines the ATP pocket.

Belongs to the RecF family.

The protein resides in the cytoplasm. Its function is as follows. The RecF protein is involved in DNA metabolism; it is required for DNA replication and normal SOS inducibility. RecF binds preferentially to single-stranded, linear DNA. It also seems to bind ATP. The chain is DNA replication and repair protein RecF from Shewanella piezotolerans (strain WP3 / JCM 13877).